Here is a 269-residue protein sequence, read N- to C-terminus: GTP cyclohydrolase FolE2 (269 aa).

This sequence belongs to the GTP cyclohydrolase IV family.

The enzyme catalyses GTP + H2O = 7,8-dihydroneopterin 3'-triphosphate + formate + H(+). It participates in cofactor biosynthesis; 7,8-dihydroneopterin triphosphate biosynthesis; 7,8-dihydroneopterin triphosphate from GTP: step 1/1. Its function is as follows. Converts GTP to 7,8-dihydroneopterin triphosphate. This chain is GTP cyclohydrolase FolE2, found in Thiobacillus denitrificans (strain ATCC 25259 / T1).